The following is a 283-amino-acid chain: Thymidylate synthase (283 aa).

Residue Arg-22 participates in dUMP binding. Cys-160 (nucleophile) is an active-site residue. Residues Arg-180–Asp-183, Asn-191, and His-221–Tyr-223 each bind dUMP. Residue Asp-183 participates in (6R)-5,10-methylene-5,6,7,8-tetrahydrofolate binding. Ser-282 provides a ligand contact to (6R)-5,10-methylene-5,6,7,8-tetrahydrofolate.

The protein belongs to the thymidylate synthase family. Bacterial-type ThyA subfamily. In terms of assembly, homodimer.

It is found in the cytoplasm. The enzyme catalyses dUMP + (6R)-5,10-methylene-5,6,7,8-tetrahydrofolate = 7,8-dihydrofolate + dTMP. Its pathway is pyrimidine metabolism; dTTP biosynthesis. Its function is as follows. Catalyzes the reductive methylation of 2'-deoxyuridine-5'-monophosphate (dUMP) to 2'-deoxythymidine-5'-monophosphate (dTMP) while utilizing 5,10-methylenetetrahydrofolate (mTHF) as the methyl donor and reductant in the reaction, yielding dihydrofolate (DHF) as a by-product. This enzymatic reaction provides an intracellular de novo source of dTMP, an essential precursor for DNA biosynthesis. This is Thymidylate synthase from Tolumonas auensis (strain DSM 9187 / NBRC 110442 / TA 4).